Consider the following 874-residue polypeptide: Alanine--tRNA ligase (874 aa).

Histidine 564, histidine 568, cysteine 665, and histidine 669 together coordinate Zn(2+).

The protein belongs to the class-II aminoacyl-tRNA synthetase family. Zn(2+) is required as a cofactor.

It localises to the cytoplasm. The catalysed reaction is tRNA(Ala) + L-alanine + ATP = L-alanyl-tRNA(Ala) + AMP + diphosphate. In terms of biological role, catalyzes the attachment of alanine to tRNA(Ala) in a two-step reaction: alanine is first activated by ATP to form Ala-AMP and then transferred to the acceptor end of tRNA(Ala). Also edits incorrectly charged Ser-tRNA(Ala) and Gly-tRNA(Ala) via its editing domain. This is Alanine--tRNA ligase from Paraburkholderia phymatum (strain DSM 17167 / CIP 108236 / LMG 21445 / STM815) (Burkholderia phymatum).